A 135-amino-acid polypeptide reads, in one-letter code: CTP pyrophosphohydrolase (135 aa).

A Nudix hydrolase domain is found at 2 to 127 (KMIEVVAAII…DIPLLEAFMA (126 aa)). Substrate-binding positions include 34 to 39 (FAGGKV), arginine 72, and aspartate 118. A Nudix box motif is present at residues 37 to 58 (GKVEPDESQRQALVRELREELG).

It belongs to the Nudix hydrolase family. As to quaternary structure, monomer. It depends on Mg(2+) as a cofactor. Requires Mn(2+) as cofactor.

It catalyses the reaction CTP + H2O = CMP + diphosphate + H(+). It carries out the reaction dCTP + H2O = dCMP + diphosphate + H(+). Functionally, hydrolase with a preference for pyrimidine substrates. Has high activity with 5-methyl-dCTP, and much lower activity with CTP, dCTP, 5-hydroxy-dCTP, 2-hydroxy-dATP and 8-hydroxy-dGTP. This chain is CTP pyrophosphohydrolase (nudG), found in Escherichia coli (strain K12).